Consider the following 361-residue polypeptide: G-protein coupled receptor 52 (361 aa).

At 1–44 (MNESRWTEWRILNMSSSIVNVSEHHSCPLGFGHYSVEDVCIFET) the chain is on the extracellular side. N-linked (GlcNAc...) asparagine glycosylation is found at Asn2, Asn13, and Asn20. A helical membrane pass occupies residues 45–65 (VVIVLLTFLIISGNLTVIFVF). Topologically, residues 66 to 81 (HCAPLLHHYTTSYFIQ) are cytoplasmic. A helical transmembrane segment spans residues 82-102 (TMAYADLLVGVTCLVPTLSLL). Topologically, residues 103–115 (HYSTGVHESLTCQ) are extracellular. A disulfide bond links Cys114 and Cys193. The helical transmembrane segment at 116–136 (VFGYIISVLKSVSMACLACIS) threads the bilayer. The Cytoplasmic segment spans residues 137–159 (VDRYLAITKPLSYNQLVTPCRLR). Residues 160-180 (ICIIMIWIYSCLIFLPSFFGW) form a helical membrane-spanning segment. Over 181–205 (GKPGYHGDIFEWCATSWLTSAYFTC) the chain is Extracellular. Residues 206 to 226 (FIVCLLYAPAALVVCFTYFHI) traverse the membrane as a helical segment. The Cytoplasmic portion of the chain corresponds to 227–265 (FKICRQHTKEINDRRARFPSHEVEASREAGHSPDRRYAM). A helical transmembrane segment spans residues 266–286 (VLFRITSVFYMLWLPYIIYFL). Residues 287–296 (LESSRVLDNP) lie on the Extracellular side of the membrane. Residues 297 to 317 (TLSFLTTWLAISNSFCNCVIY) form a helical membrane-spanning segment. The Cytoplasmic portion of the chain corresponds to 318 to 361 (SLSNSVFRLGLRRLSETMCTSCVCAKDQEAQDPKPRRRANSCSI).

It belongs to the G-protein coupled receptor 1 family. Expressed in brain, especially in striatum. Expressed in the striatum, nucleus accumbens, and lateral globus pallidus.

It is found in the cell membrane. In terms of biological role, G- protein coupled receptor activated by antipsychotics reserpine leading to an increase in intracellular cAMP and its internalization. May play a role in locomotor activity through modulation of dopamine, NMDA and ADORA2A-induced locomotor activity. These behavioral changes are accompanied by modulation of the dopamine receptor signaling pathway in striatum. Modulates HTT level via cAMP-dependent but PKA independent mechanisms throught activation of RAB39B that translocates HTT to the endoplasmic reticulum, thus avoiding proteasome degradation. The polypeptide is G-protein coupled receptor 52 (Mus musculus (Mouse)).